We begin with the raw amino-acid sequence, 247 residues long: Probable transcriptional regulatory protein Dvul_0986 (247 aa).

Residues 1–22 are disordered; it reads MAGHSKWANIQHRKGRQDAKRG.

Belongs to the TACO1 family.

The protein localises to the cytoplasm. In Nitratidesulfovibrio vulgaris (strain DP4) (Desulfovibrio vulgaris), this protein is Probable transcriptional regulatory protein Dvul_0986.